Reading from the N-terminus, the 167-residue chain is Large ribosomal subunit protein uL23 (167 aa).

Positions 1–118 (MNVNEIIKGP…TEEKAKIAKK (118 aa)) are large ribosomal subunit protein uL23. 2 disordered regions span residues 91–112 (FEDESPQDQKDSETVSENTEEK) and 136–167 (KQAELAKKDSETNENQEKRIENQTENQENSAN). Composition is skewed to basic and acidic residues over residues 97 to 112 (QDQKDSETVSENTEEK) and 136 to 157 (KQAELAKKDSETNENQEKRIEN). Residues 119 to 167 (KAELEAKNKEIAEKLAKKQAELAKKDSETNENQEKRIENQTENQENSAN) form a unknown region. The span at 158-167 (QTENQENSAN) shows a compositional bias: polar residues.

The protein belongs to the universal ribosomal protein uL23 family. Part of the 50S ribosomal subunit. Contacts protein L29, and trigger factor when it is bound to the ribosome.

In terms of biological role, one of the early assembly proteins it binds 23S rRNA. One of the proteins that surrounds the polypeptide exit tunnel on the outside of the ribosome. Forms the main docking site for trigger factor binding to the ribosome. The chain is Large ribosomal subunit protein uL23 from Mesomycoplasma hyopneumoniae (strain J / ATCC 25934 / NCTC 10110) (Mycoplasma hyopneumoniae).